A 373-amino-acid polypeptide reads, in one-letter code: Caspase-4 (373 aa).

The interval 1-59 (MAENKHPDKPLKVLEQLGKEVLTEYLEKLVQSNVLKLKEEDKQKFNNAERSDKRWVFVD) is required for LPS-binding. Residues 1–80 (MAENKHPDKP…MLLQTFFSVD (80 aa)) constitute a propeptide that is removed on maturation. One can recognise a CARD domain in the interval 1 to 91 (MAENKHPDKP…GSHHGEANLE (91 aa)). Serine 83 carries the phosphoserine modification. Residues histidine 206 and cysteine 254 contribute to the active site. Positions 267 to 285 (SSKPQLCRGVDLPRNMEAD) are excised as a propeptide. Position 310 is a (Microbial infection) ADP-riboxanated arginine (arginine 310).

It belongs to the peptidase C14A family. In terms of assembly, heterotetramer that consists of two anti-parallel arranged heterodimers, each one formed by a 20 kDa (Caspase-4 subunit p20) and a 10 kDa (Caspase-4 subunit p10) subunit. Upon direct LPS-binding, forms large homooligomers, resulting in its activation. These oligomers are often referred to as 'non-canonical inflammasomes'. In its precursor form, interacts with TMEM214; this interaction is required for association with the endoplasmic reticulum membrane. Interacts with CASP1. Interacts with NOD2. Interacts with Serpinb1a, Serpinb1b and Serpinb1c; these interactions regulate CASP4 activity. As to quaternary structure, heterotetramer that consists of two anti-parallel arranged heterodimers, each one formed by a 20 kDa (Caspase-4 subunit p20) and a 10 kDa (Caspase-4 subunit p10) subunit. In terms of processing, in response to activation signals, undergoes autoproteolytic cleavage and activation. (Microbial infection) ADP-riboxanation by S.flexneri OspC3 blocks CASP4 autoprocessing, preventing CASP4 activation and ability to recognize and cleave GSDMD, thereby thwarting the inflammasome/pyroptosis-mediated defense. As to expression, widely expressed, including in thymus, lung and spleen (at protein level). Very low levels, if any, in the brain.

Its subcellular location is the cytoplasm. It is found in the cytosol. It localises to the endoplasmic reticulum membrane. The protein resides in the mitochondrion. The protein localises to the inflammasome. Its subcellular location is the secreted. The enzyme catalyses Strict requirement for Asp at the P1 position and has a preferred cleavage sequence of (Ile/Leu/Val/Phe)-Gly-His-Asp-|-.. Activated by homooligomerization induced by direct binding to cytosolic LPS, in a TLR4-independent manner. In addition to LPS, CASP4/CASP11 may also be activated by oxidized phospholipid 1-palmitoyl-2-arachidonoyl- sn-glycero-3-phosphorylcholine, an oxidized phospholipid (oxPAPC), in dendritic cells, promoting adaptive immunity. The role of oxPAPC is however unclear and another report suggests that oxPAPC competes with LPS-binding and inhibits the non-canonical inflammasome in macrophages. Inflammatory caspase that acts as the effector of the non-canonical inflammasome by mediating lipopolysaccharide (LPS)-induced pyroptosis. Also indirectly activates the NLRP3 and NLRP6 inflammasomes. Acts as a thiol protease that cleaves a tetrapeptide after an Asp residue at position P1: catalyzes cleavage of CGAS and GSDMD. In contrast to its human ortholog, does not cleave IL18. Effector of the non-canonical inflammasome independently of NLRP3 inflammasome and CASP1: the non-canonical inflammasome promotes pyroptosis through GSDMD cleavage without involving secretion of cytokine IL1B and IL18. In the non-canonical inflammasome, CASP4/CASP11 is activated by direct binding to the lipid A moiety of LPS without the need of an upstream sensor. LPS-binding promotes CASP4/CASP11 activation and CASP4/CASP11-mediated cleavage of GSDMD, followed by pyroptosis of infected cells and their extrusion into the gut lumen. Also indirectly promotes secretion of mature cytokines (IL1A, IL18 and HMGB1) downstream of GSDMD-mediated pyroptosis via activation of the NLRP3 and NLRP6 inflammasomes. Involved in NLRP3-dependent CASP1 activation and IL1B and IL18 secretion in response to non-canonical activators, such as UVB radiation or cholera enterotoxin. Involved in NLRP6 inflammasome-dependent activation in response to lipoteichoic acid (LTA), a cell-wall component of Gram-positive bacteria, which leads to CASP1 activation and IL1B and IL18 secretion. Involved in LPS-induced IL6 secretion; this activity may not require caspase enzymatic activity. The non-canonical inflammasome is required for innate immunity to cytosolic, but not vacuolar, bacteria. Plays a crucial role in the restriction of S.typhimurium replication in colonic epithelial cells during infection. Activation of the non-canonical inflammasome in brain endothelial cells can lead to excessive pyroptosis, leading to blood-brain barrier breakdown. Pyroptosis limits bacterial replication, while cytokine secretion promotes the recruitment and activation of immune cells and triggers mucosal inflammation. May also act as an activator of adaptive immunity in dendritic cells, following activation by oxidized phospholipid 1-palmitoyl-2-arachidonoyl- sn-glycero-3-phosphorylcholine, an oxidized phospholipid (oxPAPC). Cleavage of GSDMD is not strictly dependent on the consensus cleavage site but depends on an exosite interface on CASP4/CASP11 that recognizes and binds the Gasdermin-D, C-terminal (GSDMD-CT) part. In contrast, it does not directly process IL1B. During non-canonical inflammasome activation, cuts CGAS and may play a role in the regulation of antiviral innate immune activation. In Mus musculus (Mouse), this protein is Caspase-4.